The sequence spans 159 residues: 2-C-methyl-D-erythritol 2,4-cyclodiphosphate synthase (159 aa).

A divalent metal cation contacts are provided by D8 and H10. 4-CDP-2-C-methyl-D-erythritol 2-phosphate is bound by residues 8-10 (DVH) and 34-35 (HS). Position 42 (H42) interacts with a divalent metal cation. 4-CDP-2-C-methyl-D-erythritol 2-phosphate-binding positions include 56-58 (DIG), 61-65 (FPDTD), 100-106 (AQAPKML), 132-135 (TTTE), F139, and R142.

Belongs to the IspF family. Homotrimer. It depends on a divalent metal cation as a cofactor.

The catalysed reaction is 4-CDP-2-C-methyl-D-erythritol 2-phosphate = 2-C-methyl-D-erythritol 2,4-cyclic diphosphate + CMP. The protein operates within isoprenoid biosynthesis; isopentenyl diphosphate biosynthesis via DXP pathway; isopentenyl diphosphate from 1-deoxy-D-xylulose 5-phosphate: step 4/6. Functionally, involved in the biosynthesis of isopentenyl diphosphate (IPP) and dimethylallyl diphosphate (DMAPP), two major building blocks of isoprenoid compounds. Catalyzes the conversion of 4-diphosphocytidyl-2-C-methyl-D-erythritol 2-phosphate (CDP-ME2P) to 2-C-methyl-D-erythritol 2,4-cyclodiphosphate (ME-CPP) with a corresponding release of cytidine 5-monophosphate (CMP). This Salmonella dublin (strain CT_02021853) protein is 2-C-methyl-D-erythritol 2,4-cyclodiphosphate synthase.